The sequence spans 95 residues: Co-chaperonin GroES (95 aa).

Belongs to the GroES chaperonin family. As to quaternary structure, heptamer of 7 subunits arranged in a ring. Interacts with the chaperonin GroEL.

It is found in the cytoplasm. In terms of biological role, together with the chaperonin GroEL, plays an essential role in assisting protein folding. The GroEL-GroES system forms a nano-cage that allows encapsulation of the non-native substrate proteins and provides a physical environment optimized to promote and accelerate protein folding. GroES binds to the apical surface of the GroEL ring, thereby capping the opening of the GroEL channel. In Novosphingobium aromaticivorans (strain ATCC 700278 / DSM 12444 / CCUG 56034 / CIP 105152 / NBRC 16084 / F199), this protein is Co-chaperonin GroES.